The primary structure comprises 343 residues: L-threonine 3-dehydrogenase (343 aa).

Cys38 contacts Zn(2+). Catalysis depends on charge relay system residues Thr40 and His43. The Zn(2+) site is built by His63, Glu64, Cys93, Cys96, Cys99, and Cys107. NAD(+) is bound by residues Ile175, Asp195, Arg200, Leu262 to Ile264, and Ile286 to Tyr287.

Belongs to the zinc-containing alcohol dehydrogenase family. As to quaternary structure, homotetramer. Zn(2+) serves as cofactor.

It is found in the cytoplasm. The catalysed reaction is L-threonine + NAD(+) = (2S)-2-amino-3-oxobutanoate + NADH + H(+). It participates in amino-acid degradation; L-threonine degradation via oxydo-reductase pathway; glycine from L-threonine: step 1/2. Functionally, catalyzes the NAD(+)-dependent oxidation of L-threonine to 2-amino-3-ketobutyrate. The chain is L-threonine 3-dehydrogenase from Paraburkholderia xenovorans (strain LB400).